The chain runs to 67 residues: uncharacterized protein (67 aa).

This is an uncharacterized protein from Dictyostelium discoideum (Social amoeba).